The primary structure comprises 79 residues: Sec-independent protein translocase protein TatA (79 aa).

A helical membrane pass occupies residues 1-21; that stretch reads MGGISIWQLLIIALIVVLLFG. Residues 43–79 are disordered; it reads MSSEEDKKALEDTEAAKTAQTTQQATEKKPESNKEQA. Positions 46–57 are enriched in basic and acidic residues; sequence EEDKKALEDTEA. The span at 58 to 67 shows a compositional bias: low complexity; it reads AKTAQTTQQA. Over residues 68-79 the composition is skewed to basic and acidic residues; sequence TEKKPESNKEQA.

The protein belongs to the TatA/E family. As to quaternary structure, the Tat system comprises two distinct complexes: a TatABC complex, containing multiple copies of TatA, TatB and TatC subunits, and a separate TatA complex, containing only TatA subunits. Substrates initially bind to the TatABC complex, which probably triggers association of the separate TatA complex to form the active translocon.

It is found in the cell inner membrane. In terms of biological role, part of the twin-arginine translocation (Tat) system that transports large folded proteins containing a characteristic twin-arginine motif in their signal peptide across membranes. TatA could form the protein-conducting channel of the Tat system. This Shewanella putrefaciens (strain CN-32 / ATCC BAA-453) protein is Sec-independent protein translocase protein TatA.